We begin with the raw amino-acid sequence, 719 residues long: Leucine-rich repeat and fibronectin type-III domain-containing protein 5 (719 aa).

Positions M1–A17 are cleaved as a signal peptide. One can recognise an LRRNT domain in the interval Q18 to R51. Residues Q18–M529 lie on the Extracellular side of the membrane. LRR repeat units lie at residues R52–N73, S76–D97, N100–G121, N124–D145, A148–K169, S172–H193, and K196–Q217. A glycan (N-linked (GlcNAc...) asparagine) is linked at N73. One can recognise an LRRCT domain in the interval N240–P286. Residues P287 to H373 enclose the Ig-like domain. A disulfide bond links C308 and C357. N330, N339, N382, N406, and N452 each carry an N-linked (GlcNAc...) asparagine glycan. The tract at residues N385–M416 is disordered. Residues G393–G412 are compositionally biased toward low complexity. One can recognise a Fibronectin type-III domain in the interval T414 to V503. A helical membrane pass occupies residues I530–I550. Topologically, residues R551–I719 are cytoplasmic. Low complexity predominate over residues S614–S627. Residues S614–I719 form a disordered region. Composition is skewed to polar residues over residues A628–Q641, E654–Q677, and L702–T713.

It belongs to the LRFN family. Can form heteromeric complexes with LRFN1, LRFN2, LRFN3 and LFRN4. Able to form homomeric complexes across cell junctions, between adjacent cells. Does not interact with DLG1, DLG2 or DLG3. Does not interact with DLG4. Glycosylated. As to expression, predominantly expressed in the brain, with a weak, but broad expression in the cerebral cortex and diencephalic nuclei. Strongly expressed in both the pyramidal layer and the dentate gyrus of the hippocampus. Also detected in other parts of the central nervous system, including the olfactory bulb, pons, cerebellum, and medulla oblongata, as well as in the peripheral nervous system, such as the ganglia of cranial nerves and the dorsal root ganglion during gestation.

It localises to the membrane. Functionally, cell adhesion molecule that mediates homophilic cell-cell adhesion in a Ca(2+)-independent manner. Promotes neurite outgrowth in hippocampal neurons. The chain is Leucine-rich repeat and fibronectin type-III domain-containing protein 5 (Lrfn5) from Mus musculus (Mouse).